The chain runs to 424 residues: UPF0597 protein Shewana3_2972 (424 aa).

Belongs to the UPF0597 family.

This Shewanella sp. (strain ANA-3) protein is UPF0597 protein Shewana3_2972.